A 270-amino-acid polypeptide reads, in one-letter code: Non-homologous end joining protein Ku (270 aa).

The Ku domain occupies 10 to 194 (SLGLLNIGIK…NYPIQKQELT (185 aa)).

The protein belongs to the prokaryotic Ku family. As to quaternary structure, homodimer. Interacts with LigD.

In terms of biological role, with LigD forms a non-homologous end joining (NHEJ) DNA repair enzyme, which repairs dsDNA breaks with reduced fidelity. Binds linear dsDNA with 5'- and 3'- overhangs but not closed circular dsDNA nor ssDNA. Recruits and stimulates the ligase activity of LigD. The chain is Non-homologous end joining protein Ku from Bacillus thuringiensis subsp. konkukian (strain 97-27).